Here is a 352-residue protein sequence, read N- to C-terminus: Photosystem II D2 protein 2 (352 aa).

Residues 40-60 (CAYLALGGWLTGTSFVTSWYT) traverse the membrane as a helical segment. His117 provides a ligand contact to chlorophyll a. A helical transmembrane segment spans residues 124 to 140 (GFMLRQFEIARLVGVRP). Pheophytin a contacts are provided by Gln129 and Asn142. A helical membrane pass occupies residues 152-165 (VFVSVFLMYPLGQS). His197 is a binding site for chlorophyll a. The chain crosses the membrane as a helical span at residues 207-227 (GALLCAIHGATVENTLFEDSE). 2 residues coordinate a plastoquinone: His214 and Phe261. His214 contacts Fe cation. Residue His268 participates in Fe cation binding. The helical transmembrane segment at 278 to 294 (GLWMSSIGIVGLALNLR) threads the bilayer.

Belongs to the reaction center PufL/M/PsbA/D family. PSII is composed of 1 copy each of membrane proteins PsbA, PsbB, PsbC, PsbD, PsbE, PsbF, PsbH, PsbI, PsbJ, PsbK, PsbL, PsbM, PsbT, PsbX, PsbY, PsbZ, Psb30/Ycf12, peripheral proteins PsbO, CyanoQ (PsbQ), PsbU, PsbV and a large number of cofactors. It forms dimeric complexes. It depends on The D1/D2 heterodimer binds P680, chlorophylls that are the primary electron donor of PSII, and subsequent electron acceptors. It shares a non-heme iron and each subunit binds pheophytin, quinone, additional chlorophylls, carotenoids and lipids. There is also a Cl(-1) ion associated with D1 and D2, which is required for oxygen evolution. The PSII complex binds additional chlorophylls, carotenoids and specific lipids. as a cofactor.

The protein localises to the cellular thylakoid membrane. It carries out the reaction 2 a plastoquinone + 4 hnu + 2 H2O = 2 a plastoquinol + O2. Functionally, photosystem II (PSII) is a light-driven water:plastoquinone oxidoreductase that uses light energy to abstract electrons from H(2)O, generating O(2) and a proton gradient subsequently used for ATP formation. It consists of a core antenna complex that captures photons, and an electron transfer chain that converts photonic excitation into a charge separation. The D1/D2 (PsbA/PsbD) reaction center heterodimer binds P680, the primary electron donor of PSII as well as several subsequent electron acceptors. D2 is needed for assembly of a stable PSII complex. In Synechococcus sp. (strain ATCC 27144 / PCC 6301 / SAUG 1402/1) (Anacystis nidulans), this protein is Photosystem II D2 protein 2.